The primary structure comprises 60 residues: Large ribosomal subunit protein uL30 (60 aa).

It belongs to the universal ribosomal protein uL30 family. As to quaternary structure, part of the 50S ribosomal subunit.

This is Large ribosomal subunit protein uL30 from Lactobacillus johnsonii (strain CNCM I-12250 / La1 / NCC 533).